Consider the following 89-residue polypeptide: Phytosulfokines 1 (89 aa).

Residues M1 to G22 form the signal peptide. A propeptide spanning residues Q23–D79 is cleaved from the precursor. Residues Q33–F68 form a disordered region. N42 is a glycosylation site (N-linked (GlcNAc...) asparagine). 2 positions are modified to sulfotyrosine: Y80 and Y82. The propeptide occupies D85–P89.

This sequence belongs to the phytosulfokine family. In terms of processing, sulfation is important for activity and for the binding to a putative membrane receptor. PSK-alpha is produced by endopeptidase digestion. PSK-beta is produced from PSK-alpha by exopeptidase digestion. Expressed throughout the seedling. More abundant in fragments containing shoot or root apexes where cells proliferate vigorously.

It localises to the secreted. Promotes plant cell differentiation, organogenesis and somatic embryogenesis as well as cell proliferation. In Oryza sativa subsp. indica (Rice), this protein is Phytosulfokines 1 (PSK1).